Here is a 442-residue protein sequence, read N- to C-terminus: D-serine dehydratase (442 aa).

Lys118 carries the post-translational modification N6-(pyridoxal phosphate)lysine.

The protein belongs to the serine/threonine dehydratase family. DsdA subfamily. Monomer. Pyridoxal 5'-phosphate serves as cofactor.

It catalyses the reaction D-serine = pyruvate + NH4(+). The protein is D-serine dehydratase of Shigella flexneri.